Reading from the N-terminus, the 236-residue chain is Phosphoribosylaminoimidazole-succinocarboxamide synthase (236 aa).

This sequence belongs to the SAICAR synthetase family.

The catalysed reaction is 5-amino-1-(5-phospho-D-ribosyl)imidazole-4-carboxylate + L-aspartate + ATP = (2S)-2-[5-amino-1-(5-phospho-beta-D-ribosyl)imidazole-4-carboxamido]succinate + ADP + phosphate + 2 H(+). It functions in the pathway purine metabolism; IMP biosynthesis via de novo pathway; 5-amino-1-(5-phospho-D-ribosyl)imidazole-4-carboxamide from 5-amino-1-(5-phospho-D-ribosyl)imidazole-4-carboxylate: step 1/2. The protein is Phosphoribosylaminoimidazole-succinocarboxamide synthase of Campylobacter jejuni (strain RM1221).